The sequence spans 468 residues: Phosphatidylglycerol--prolipoprotein diacylglyceryl transferase (468 aa).

3 consecutive transmembrane segments (helical) span residues 21 to 41, 56 to 76, and 96 to 116; these read LPVR…LLIG, YDIA…YHLA, and IWDG…GAWI. Arginine 144 contributes to the a 1,2-diacyl-sn-glycero-3-phospho-(1'-sn-glycerol) binding site. 3 consecutive transmembrane segments (helical) span residues 192 to 212, 218 to 238, and 256 to 276; these read VVQP…VALI, FIIG…AGRF, and INSF…ILAP. A disordered region spans residues 349-468; that stretch reads VVQVADRDGE…RWWRLRRRRQ (120 aa). The segment covering 391-406 has biased composition (low complexity); the sequence is AEAASAAPEEPAALAS. Residues 445 to 455 show a composition bias toward basic and acidic residues; sequence DGIRRQDDFSS. Residues 456–468 show a composition bias toward basic residues; it reads RRRRWWRLRRRRQ.

This sequence belongs to the Lgt family.

It is found in the cell membrane. It catalyses the reaction L-cysteinyl-[prolipoprotein] + a 1,2-diacyl-sn-glycero-3-phospho-(1'-sn-glycerol) = an S-1,2-diacyl-sn-glyceryl-L-cysteinyl-[prolipoprotein] + sn-glycerol 1-phosphate + H(+). It participates in protein modification; lipoprotein biosynthesis (diacylglyceryl transfer). Functionally, catalyzes the transfer of the diacylglyceryl group from phosphatidylglycerol to the sulfhydryl group of the N-terminal cysteine of a prolipoprotein, the first step in the formation of mature lipoproteins. This is Phosphatidylglycerol--prolipoprotein diacylglyceryl transferase from Mycobacterium bovis (strain ATCC BAA-935 / AF2122/97).